The sequence spans 232 residues: Large ribosomal subunit protein uL3 (232 aa).

The protein belongs to the universal ribosomal protein uL3 family. Part of the 50S ribosomal subunit. Forms a cluster with proteins L14 and L19.

In terms of biological role, one of the primary rRNA binding proteins, it binds directly near the 3'-end of the 23S rRNA, where it nucleates assembly of the 50S subunit. The polypeptide is Large ribosomal subunit protein uL3 (Sorangium cellulosum (strain So ce56) (Polyangium cellulosum (strain So ce56))).